The following is a 38-amino-acid chain: MKVRPSVKPICEYCKVIRRNGRVMVICPTNPKHKQRQG.

This sequence belongs to the bacterial ribosomal protein bL36 family.

The protein is Large ribosomal subunit protein bL36 of Streptococcus agalactiae serotype III (strain NEM316).